Here is a 450-residue protein sequence, read N- to C-terminus: Neuronal acetylcholine receptor subunit alpha-10 (450 aa).

The signal sequence occupies residues 1-24; the sequence is MGLRSHHLSLGLLLLFLLPAECLG. Residues 25–237 are Extracellular-facing; that stretch reads AEGRLALKLF…FTLLLRRRAA (213 aa). N-linked (GlcNAc...) asparagine glycans are attached at residues Asn40 and Asn56. 2 disulfides stabilise this stretch: Cys154–Cys168 and Cys218–Cys219. Helical transmembrane passes span 238–258, 268–288, and 302–322; these read AYVCNLLLPCVLISLLAPLAF, VSLGVTVLLALTVFQLLLAES, and YMATMTMVTFSTALTILIMNL. Topologically, residues 323-428 are cytoplasmic; that stretch reads HYCGPSVRPV…WKRLARVMDR (106 aa). A disordered region spans residues 355-380; sequence EPCGQSRPPELSPSPQSPEGGAGPPA. Residues 429-449 traverse the membrane as a helical segment; that stretch reads FFLAIFFSMALVMSLLVLVQA.

It belongs to the ligand-gated ion channel (TC 1.A.9) family. Acetylcholine receptor (TC 1.A.9.1) subfamily. Alpha-10/CHRNA10 sub-subfamily. As to quaternary structure, forms homo- or heterooligomeric channels in conjunction with CHRNA10. The native outer hair cell receptor may be composed of CHRNA9:CHRNA10 heterooligomers. Found in the stoichiometric form (CHRNA9)2:(CHRNA10)3. Expressed in inner-ear tissue, tonsil, immortalized B-cells, cultured T-cells and peripheral blood lymphocytes.

The protein localises to the synaptic cell membrane. The protein resides in the cell membrane. The catalysed reaction is Ca(2+)(in) = Ca(2+)(out). It catalyses the reaction K(+)(in) = K(+)(out). It carries out the reaction Na(+)(in) = Na(+)(out). The enzyme catalyses Mg(2+)(in) = Mg(2+)(out). Its activity is regulated as follows. Activated by a myriad of ligands such as acetylcholine. AChR activity is inhibited by the antagonists alpha-conotoxins RgIA and GeXXA, small disulfide-constrained peptides from cone snails. In terms of biological role, component of neuronal acetylcholine receptors (nAChRs) that function as pentameric, ligand-gated cation channels with high calcium permeability. nAChRs are excitatory neurotrasnmitter receptors formed by a collection of nAChR subunits. Each nAchR subunit confers differential attributes to channel properties, including activation, deactivation and desensitization kinetics, pH sensitivity, cation permeability, and binding to allosteric modulators. Forms heteropentamers with CHRNA9. Expressed in the inner ear, in sympathetic neurons and in other non-neuronal cells, such as skin keratinocytes and lymphocytes. nAChR formed by CHRNA9:CHRNA10 is involved in modulation of auditory stimuli. The channel is permeable to a range of divalent cations including calcium, the influx of which may activate a potassium current which hyperpolarizes the cell membrane. In the ear, mediates synaptic transmission between efferent olivocochlear fibers and hair cells of the cochlea, this may lead to a reduction in basilar membrane motion, altering the activity of auditory nerve fibers and reducing the range of dynamic hearing. This may protect against acoustic trauma. May also regulate keratinocyte adhesion. The protein is Neuronal acetylcholine receptor subunit alpha-10 of Homo sapiens (Human).